Reading from the N-terminus, the 127-residue chain is Large ribosomal subunit protein bL20 (127 aa).

This sequence belongs to the bacterial ribosomal protein bL20 family.

In terms of biological role, binds directly to 23S ribosomal RNA and is necessary for the in vitro assembly process of the 50S ribosomal subunit. It is not involved in the protein synthesizing functions of that subunit. The chain is Large ribosomal subunit protein bL20 (rplT) from Streptomyces coelicolor (strain ATCC BAA-471 / A3(2) / M145).